The sequence spans 260 residues: Voltage-dependent calcium channel gamma-6 subunit (260 aa).

4 consecutive transmembrane segments (helical) span residues 43–63 (LLVAIVGATLAVLAVGTEFWV), 143–163 (VIAVLGLTAMALGCLCVIMVL), 169–189 (FLLRLGAVCFGLSGLLLFVSL), and 221–241 (LGCGVGAGLILLLGGVCFLLL).

Belongs to the PMP-22/EMP/MP20 family. CACNG subfamily. Interacts with CACNA1C. Identified in a complex with the L-type calcium channel subunits CACNA1C, CACNA2D1 and either CACNB1 or CACNB2. Detected in heart atrium and ventricle, aorta and skeletal muscle. Detected in heart left ventricle.

Its subcellular location is the cell membrane. In terms of biological role, regulates the activity of L-type calcium channels that contain CACNA1C as pore-forming subunit. The sequence is that of Voltage-dependent calcium channel gamma-6 subunit (Cacng6) from Rattus norvegicus (Rat).